The primary structure comprises 361 residues: Protein RecA (361 aa).

77-84 (GPESSGKT) is an ATP binding site.

The protein belongs to the RecA family.

The protein localises to the cytoplasm. Its function is as follows. Can catalyze the hydrolysis of ATP in the presence of single-stranded DNA, the ATP-dependent uptake of single-stranded DNA by duplex DNA, and the ATP-dependent hybridization of homologous single-stranded DNAs. It interacts with LexA causing its activation and leading to its autocatalytic cleavage. In Sinorhizobium medicae (strain WSM419) (Ensifer medicae), this protein is Protein RecA.